A 248-amino-acid polypeptide reads, in one-letter code: tRNA (guanine-N(1)-)-methyltransferase (248 aa).

S-adenosyl-L-methionine-binding positions include Gly-113 and 133-138 (IGDYVL).

The protein belongs to the RNA methyltransferase TrmD family. Homodimer.

The protein localises to the cytoplasm. It catalyses the reaction guanosine(37) in tRNA + S-adenosyl-L-methionine = N(1)-methylguanosine(37) in tRNA + S-adenosyl-L-homocysteine + H(+). Specifically methylates guanosine-37 in various tRNAs. The sequence is that of tRNA (guanine-N(1)-)-methyltransferase from Shewanella woodyi (strain ATCC 51908 / MS32).